Consider the following 469-residue polypeptide: Tubulin gamma chain (469 aa).

142–148 (AGGTGSG) is a GTP binding site.

This sequence belongs to the tubulin family.

The protein localises to the cytoplasm. It is found in the cytoskeleton. The protein resides in the microtubule organizing center. It localises to the spindle pole body. In terms of biological role, tubulin is the major constituent of microtubules. The gamma chain is found at microtubule organizing centers (MTOC) such as the spindle poles or the centrosome, suggesting that it is involved in the minus-end nucleation of microtubule assembly. The sequence is that of Tubulin gamma chain (TUB4) from Microbotryum violaceum (Anther smut fungus).